Here is a 398-residue protein sequence, read N- to C-terminus: Dihydrolipoyllysine-residue succinyltransferase component of 2-oxoglutarate dehydrogenase complex (398 aa).

The Lipoyl-binding domain maps to 2 to 77 (SIKIIIPSLG…TVGEEVGEIN (76 aa)). An N6-lipoyllysine modification is found at lysine 43. One can recognise a Peripheral subunit-binding (PSBD) domain in the interval 112-149 (ILAPSVQKLVTENKLDPNNIKGTGRGGRITKYDVLETI). Active-site residues include histidine 369 and aspartate 373.

Belongs to the 2-oxoacid dehydrogenase family. As to quaternary structure, forms a 24-polypeptide structural core with octahedral symmetry. Part of the 2-oxoglutarate dehydrogenase (OGDH) complex composed of E1 (2-oxoglutarate dehydrogenase), E2 (dihydrolipoamide succinyltransferase) and E3 (dihydrolipoamide dehydrogenase); the complex contains multiple copies of the three enzymatic components (E1, E2 and E3). Requires (R)-lipoate as cofactor.

The enzyme catalyses N(6)-[(R)-dihydrolipoyl]-L-lysyl-[protein] + succinyl-CoA = N(6)-[(R)-S(8)-succinyldihydrolipoyl]-L-lysyl-[protein] + CoA. It participates in amino-acid degradation; L-lysine degradation via saccharopine pathway; glutaryl-CoA from L-lysine: step 6/6. Functionally, E2 component of the 2-oxoglutarate dehydrogenase (OGDH) complex which catalyzes the second step in the conversion of 2-oxoglutarate to succinyl-CoA and CO(2). In Rickettsia typhi (strain ATCC VR-144 / Wilmington), this protein is Dihydrolipoyllysine-residue succinyltransferase component of 2-oxoglutarate dehydrogenase complex (sucB).